We begin with the raw amino-acid sequence, 871 residues long: DNA mismatch repair protein MutS (871 aa).

Residue 618 to 625 (GPNMSGKS) participates in ATP binding.

This sequence belongs to the DNA mismatch repair MutS family.

This protein is involved in the repair of mismatches in DNA. It is possible that it carries out the mismatch recognition step. This protein has a weak ATPase activity. The chain is DNA mismatch repair protein MutS from Christiangramia forsetii (strain DSM 17595 / CGMCC 1.15422 / KT0803) (Gramella forsetii).